The sequence spans 479 residues: FAD-dependent monooxygenase atmM (479 aa).

A helical membrane pass occupies residues 10-30 (IIVGGSVAGLTLAHCLQRAGI). Positions 36, 50, 109, 309, and 322 each coordinate FAD. A helical membrane pass occupies residues 445–465 (WILVLLVIVVSFGLHSPELVI).

Belongs to the paxM FAD-dependent monooxygenase family. Requires FAD as cofactor.

Its subcellular location is the membrane. It functions in the pathway secondary metabolite biosynthesis. FAD-dependent monooxygenase; part of the ATM1 gene cluster that mediates the biosynthesis of aflatrem, a tremorgenic mycotoxin with acute neurotoxic effects. Synthesis of geranylgeranyl diphosphate (GGPP) by AtmG (a GGPP synthase) precedes condensation of GGPP with indole 3-glycerol phosphate, followed by epoxidation and cyclization by AtmM (a FAD-dependent monooxygenase) and AtmC (a prenyltransferase) to produce paspaline. AtmB is also essential for paspaline production, but its exact role has not been identified yet. AtmP, a cytochrome P450 monooxygenase, subsequently converts paspaline to 13-desoxypaxilline via PC-M6 by removal of the C-30 methyl group and oxidation at C-10. AtmQ, a cytochrome P450 monooxygenase, then catalyzes the oxidation of 13-desoxypaxilline, first at C-7 to produce paspalicine and then at C-13 to form paspalinine. Finally, AtmD prenylates paspalinine to form aflatrem. This Aspergillus flavus protein is FAD-dependent monooxygenase atmM.